The chain runs to 286 residues: MARQVICWCFTLNNPLSPLSLHDSMKYLVYQTEQGEAGNIHFQGYIEMKKRTSLAGMKKLIPGAHFEKRRGTQGEARAYSMKEDTRLEGPWEYGEFVPTIEDKLREVMNDMKITGKRPIEYIEECCNTYDKSASTLREFRGELKKKKAISSWELQRKPWMGEVDALLQERDGRRIIWVYGPQGGEGKTSYAKHLVKTRDAFYSTGGKTADIAFAWDHQELVLFDFPRSFEEYVNYGVIEQLKNGIIQSGKYQSVIKYSDYVEVIVFANFTPRSGMFSEDRIVYVYA.

One can recognise a CRESS-DNA virus Rep endonuclease domain in the interval 2–96 (ARQVICWCFT…LEGPWEYGEF (95 aa)). Positions 9 to 12 (CFTL) match the RCR-1 motif. Positions 33 and 41 each coordinate a divalent metal cation. Positions 41 to 43 (HFQ) match the RCR-2 motif. Residues 50–70 (KRTSLAGMKKLIPGAHFEKRR) carry the Nuclear localization signal motif. Y79 (for DNA cleavage activity) is an active-site residue. The short motif at 79–82 (YSMK) is the RCR-3 element. Position 84 (D84) interacts with a divalent metal cation. Positions 96 to 102 (FVPTIED) match the Nuclear localization signal motif. An ATP-binding site is contributed by 186–188 (GKT).

Belongs to the nanoviridea/circoviridae replication-associated protein family. As to quaternary structure, homooligomer (Potential). Rep binds to repeated DNA motifs (iterons). Requires Mg(2+) as cofactor. It depends on Mn(2+) as a cofactor.

The protein resides in the host nucleus. It catalyses the reaction ATP + H2O = ADP + phosphate + H(+). Its function is as follows. Essential for the replication of all genomic viral ssDNA (trans-replication). The closed circular ssDNA genome is first converted to a superhelical dsDNA. Rep binds a specific hairpin at the genome origin of replication. Introduces an endonucleolytic nick within the conserved sequence 5'-A[GT]TATTAC-3' in the intergenic region of the genome, thereby initiating the rolling circle replication (RCR). Following cleavage, binds covalently to the 5'-phosphate of DNA as a tyrosyl ester. The cleavage gives rise to a free 3'-OH that serves as a primer for the cellular DNA polymerase. The polymerase synthesizes the (+) strand DNA by rolling circle mechanism. After one round of replication, a Rep-catalyzed nucleotidyl transfer reaction releases a circular single-stranded virus genome, thereby terminating the replication. Displays origin-specific DNA cleavage, nucleotidyl transferase, ATPase and helicase activities. The polypeptide is Master replication protein (DNA-R) (Cicer arietinum (Chickpea)).